A 282-amino-acid polypeptide reads, in one-letter code: uncharacterized protein (282 aa).

The HTH rpiR-type domain maps to 4 to 80; it reads STLTSKLESL…VDYLSDEKQY (77 aa). The segment at residues 40–59 is a DNA-binding region (H-T-H motif); it reads VAELAQAAGVSSASVIRFTR. Positions 125 to 265 constitute an SIS domain; that stretch reads IAQKIVEAKR…FFKYLTLTNE (141 aa).

This is an uncharacterized protein from Providencia stuartii.